Here is a 117-residue protein sequence, read N- to C-terminus: V-type proton ATPase subunit G (117 aa).

Belongs to the V-ATPase G subunit family. V-ATPase is a heteromultimeric enzyme made up of two complexes: the ATP-hydrolytic V1 complex and the proton translocation V0 complex. The V1 complex consists of three catalytic AB heterodimers that form a heterohexamer, three peripheral stalks each consisting of EG heterodimers, one central rotor including subunits D and F, and the regulatory subunits C and H. The proton translocation complex V0 consists of the proton transport subunit a, a ring of proteolipid subunits c9c'', rotary subunit d, subunits e and f, and the accessory subunits VhaAC45 and ATP6AP2.

In terms of biological role, subunit of the V1 complex of vacuolar(H+)-ATPase (V-ATPase), a multisubunit enzyme composed of a peripheral complex (V1) that hydrolyzes ATP and a membrane integral complex (V0) that translocates protons. V-ATPase is responsible for acidifying and maintaining the pH of intracellular compartments and in some cell types, is targeted to the plasma membrane, where it is responsible for acidifying the extracellular environment. In enterocytes, acts as part of a pHCl-2 sensory pathway which mediates Tor-dependent larval growth and metabolism in response to zinc availability. Likely acts in maintaining enterocyte lysosomal acidification which consequently promotes Tor activation at the lysosome membrane. The sequence is that of V-type proton ATPase subunit G (Vha13) from Drosophila melanogaster (Fruit fly).